We begin with the raw amino-acid sequence, 309 residues long: Ribonuclease Z (309 aa).

The Zn(2+) site is built by histidine 63, histidine 65, aspartate 67, histidine 68, histidine 141, aspartate 212, and histidine 270. Aspartate 67 acts as the Proton acceptor in catalysis.

It belongs to the RNase Z family. As to quaternary structure, homodimer. It depends on Zn(2+) as a cofactor.

It carries out the reaction Endonucleolytic cleavage of RNA, removing extra 3' nucleotides from tRNA precursor, generating 3' termini of tRNAs. A 3'-hydroxy group is left at the tRNA terminus and a 5'-phosphoryl group is left at the trailer molecule.. Zinc phosphodiesterase, which displays some tRNA 3'-processing endonuclease activity. Probably involved in tRNA maturation, by removing a 3'-trailer from precursor tRNA. This Halalkalibacterium halodurans (strain ATCC BAA-125 / DSM 18197 / FERM 7344 / JCM 9153 / C-125) (Bacillus halodurans) protein is Ribonuclease Z.